The following is a 252-amino-acid chain: 5'-nucleotidase SurE (252 aa).

Positions 8, 9, 39, and 95 each coordinate a divalent metal cation.

The protein belongs to the SurE nucleotidase family. The cofactor is a divalent metal cation.

The protein resides in the cytoplasm. It carries out the reaction a ribonucleoside 5'-phosphate + H2O = a ribonucleoside + phosphate. Nucleotidase that shows phosphatase activity on nucleoside 5'-monophosphates. The chain is 5'-nucleotidase SurE from Clostridium botulinum (strain 657 / Type Ba4).